Consider the following 391-residue polypeptide: Autophagy-related protein 18d (391 aa).

The tract at residues 1-24 (MDPRRNFQPGGYDSRNTFTSGSFG) is disordered. WD repeat units lie at residues 31-69 (SDEAELVSVSWNQDYSCFAAGTSHGFRIYNCEPFKETFR), 74-118 (DGGF…CISE), 203-243 (AHDS…RLQE), and 248-287 (VDRADIYSIALSPNVQWLAVSSDKGTVHIFSLRVRVIGED).

The protein belongs to the WD repeat PROPPIN family. As to quaternary structure, component of the PI(3,5)P2 regulatory complex at least composed of ATG18, SAC/FIG4, FAB1 and VAC14. In terms of tissue distribution, expressed in roots, stems, flowers and leaves.

It localises to the preautophagosomal structure membrane. The protein resides in the vacuole membrane. Functionally, the PI(3,5)P2 regulatory complex regulates both the synthesis and turnover of phosphatidylinositol 3,5-bisphosphate (PtdIns(3,5)P2). Required for autophagy. In Arabidopsis thaliana (Mouse-ear cress), this protein is Autophagy-related protein 18d (ATG18D).